The primary structure comprises 322 residues: MKITFLDFEQPIAELEAKIEELRFAQDDSAVDISAEILRLQKKSQSLTNSIYGKLTPWQISQVARHPQRPYTLDYIQNLFTDFEELHGDRGFADDYAIIGGLARFDGQTVMVIGHQKGRDTKEKIHRNFGMPKPEGYRKALRLMRLAEKFAIPLFTFIDTPGAYPGIGAEERGQSEAIGHNLYVMAELKVPVICTVIGEGGSGGALAVAVGDAIQMLQYATYSVISPEGCASILWKSADKAPEAAEIMGITAHRLKTLGLIDKIIDEPSGGAHRDQPATMQAVKKALQDSLKLLQEYSIHMLLEKRFERLMGYGQFKEVKVR.

The region spanning alanine 30–leucine 293 is the CoA carboxyltransferase C-terminal domain.

Belongs to the AccA family. In terms of assembly, acetyl-CoA carboxylase is a heterohexamer composed of biotin carboxyl carrier protein (AccB), biotin carboxylase (AccC) and two subunits each of ACCase subunit alpha (AccA) and ACCase subunit beta (AccD).

The protein resides in the cytoplasm. It catalyses the reaction N(6)-carboxybiotinyl-L-lysyl-[protein] + acetyl-CoA = N(6)-biotinyl-L-lysyl-[protein] + malonyl-CoA. It functions in the pathway lipid metabolism; malonyl-CoA biosynthesis; malonyl-CoA from acetyl-CoA: step 1/1. Its function is as follows. Component of the acetyl coenzyme A carboxylase (ACC) complex. First, biotin carboxylase catalyzes the carboxylation of biotin on its carrier protein (BCCP) and then the CO(2) group is transferred by the carboxyltransferase to acetyl-CoA to form malonyl-CoA. The protein is Acetyl-coenzyme A carboxylase carboxyl transferase subunit alpha of Nitrosospira multiformis (strain ATCC 25196 / NCIMB 11849 / C 71).